The sequence spans 344 residues: MRNVQDQPLVSPTEPMIDPFGRAVTYLRVSVTDRCDFRCTYCMAEHMTFLPKKDLLTLEELDRLCSVFIEKGVRKLRLTGGEPLVRKNIMHLIGNLSRHLKSGALDELTLTTNGSQLARFAGELADCGVRRINVSLDTLNPEKFRTITRWGDLSRVLEGIDAAQKAAIHVKINAVALKDFNDAEIPELIRWAHGRGMDVTLIETMPMGEIEFDRTDQYLPLSQVRADLASQFTLADIPYRTGGPARYVTISETGGRLGFITPMTYNFCESCNRVRLTCTGMLYMCLGQNDDADLRKALRESESDEHLSQAIDEAISRKPKGHDFIIDREHNRPSVARHMSLTGG.

The 227-residue stretch at 19–245 (PFGRAVTYLR…DIPYRTGGPA (227 aa)) folds into the Radical SAM core domain. Arg28 is a GTP binding site. Positions 35 and 39 each coordinate [4Fe-4S] cluster. Position 41 (Tyr41) interacts with S-adenosyl-L-methionine. Position 42 (Cys42) interacts with [4Fe-4S] cluster. Position 77 (Arg77) interacts with GTP. S-adenosyl-L-methionine is bound at residue Gly81. Thr111 lines the GTP pocket. S-adenosyl-L-methionine is bound at residue Ser135. Lys171 contributes to the GTP binding site. Residue Met205 coordinates S-adenosyl-L-methionine. The [4Fe-4S] cluster site is built by Cys268 and Cys271. 273–275 (RVR) serves as a coordination point for GTP. Cys285 contributes to the [4Fe-4S] cluster binding site.

This sequence belongs to the radical SAM superfamily. MoaA family. In terms of assembly, monomer and homodimer. [4Fe-4S] cluster serves as cofactor.

It catalyses the reaction GTP + AH2 + S-adenosyl-L-methionine = (8S)-3',8-cyclo-7,8-dihydroguanosine 5'-triphosphate + 5'-deoxyadenosine + L-methionine + A + H(+). It participates in cofactor biosynthesis; molybdopterin biosynthesis. In terms of biological role, catalyzes the cyclization of GTP to (8S)-3',8-cyclo-7,8-dihydroguanosine 5'-triphosphate. The chain is GTP 3',8-cyclase from Brucella abortus (strain S19).